The primary structure comprises 218 residues: 7-cyano-7-deazaguanine synthase (218 aa).

11 to 21 (LSGGMDSATLL) contributes to the ATP binding site. Residues C193, C201, C204, and C207 each contribute to the Zn(2+) site.

This sequence belongs to the QueC family. Zn(2+) serves as cofactor.

It catalyses the reaction 7-carboxy-7-deazaguanine + NH4(+) + ATP = 7-cyano-7-deazaguanine + ADP + phosphate + H2O + H(+). It functions in the pathway purine metabolism; 7-cyano-7-deazaguanine biosynthesis. Catalyzes the ATP-dependent conversion of 7-carboxy-7-deazaguanine (CDG) to 7-cyano-7-deazaguanine (preQ(0)). The protein is 7-cyano-7-deazaguanine synthase of Aquifex aeolicus (strain VF5).